The primary structure comprises 291 residues: 4-diphosphocytidyl-2-C-methyl-D-erythritol kinase (291 aa).

Residue K10 is part of the active site. 94–104 (PVSAGLAGGSS) is a binding site for ATP. D136 is a catalytic residue.

Belongs to the GHMP kinase family. IspE subfamily.

It carries out the reaction 4-CDP-2-C-methyl-D-erythritol + ATP = 4-CDP-2-C-methyl-D-erythritol 2-phosphate + ADP + H(+). Its pathway is isoprenoid biosynthesis; isopentenyl diphosphate biosynthesis via DXP pathway; isopentenyl diphosphate from 1-deoxy-D-xylulose 5-phosphate: step 3/6. Catalyzes the phosphorylation of the position 2 hydroxy group of 4-diphosphocytidyl-2C-methyl-D-erythritol. This Listeria monocytogenes serotype 4a (strain HCC23) protein is 4-diphosphocytidyl-2-C-methyl-D-erythritol kinase.